The following is a 194-amino-acid chain: uncharacterized protein (194 aa).

This is an uncharacterized protein from Methanocaldococcus jannaschii (strain ATCC 43067 / DSM 2661 / JAL-1 / JCM 10045 / NBRC 100440) (Methanococcus jannaschii).